A 74-amino-acid chain; its full sequence is RNA-binding protein Hfq (74 aa).

Positions 9-69 (DQYLNQLRKN…ISTFSPVKNV (61 aa)) constitute a Sm domain.

It belongs to the Hfq family. As to quaternary structure, homohexamer.

Functionally, RNA chaperone that binds small regulatory RNA (sRNAs) and mRNAs to facilitate mRNA translational regulation in response to envelope stress, environmental stress and changes in metabolite concentrations. Also binds with high specificity to tRNAs. This chain is RNA-binding protein Hfq, found in Oceanobacillus iheyensis (strain DSM 14371 / CIP 107618 / JCM 11309 / KCTC 3954 / HTE831).